The chain runs to 274 residues: Coagulation factor IX (274 aa).

Sulfotyrosine is present on tyrosine 23. Asparagine 25 carries N-linked (GlcNAc...) asparagine glycosylation. Serine 26 is modified (phosphoserine). A glycan (N-linked (GlcNAc...) asparagine) is linked at asparagine 35. Threonine 37 is a glycosylation site (O-linked (GalNAc...) threonine). Asparagine 40 is a glycosylation site (N-linked (GlcNAc...) asparagine). Residues 49-274 (VVGGEDAARG…IYTKVSRYEV (226 aa)) enclose the Peptidase S1 domain. Cysteine 74 and cysteine 90 are joined by a disulfide. The active-site Charge relay system is the histidine 89. Ca(2+)-binding residues include glutamate 103, asparagine 105, glutamate 110, and glutamate 113. Asparagine 128 is a glycosylation site (N-linked (GlcNAc...) asparagine). The active-site Charge relay system is aspartate 137. 2 disulfide bridges follow: cysteine 204–cysteine 218 and cysteine 229–cysteine 257. Serine 233 acts as the Charge relay system in catalysis.

Belongs to the peptidase S1 family. As to quaternary structure, heterodimer of a light chain and a heavy chain; disulfide-linked. Interacts (inactive and activated) with F11 (activated) in calcium-dependent manner. Interacts with SERPINC1. Post-translationally, activated by factor XIa, which excises the activation peptide. The propeptide can also be removed by snake venom protease. Activated by coagulation factor VIIa-tissue factor (F7-F3) complex in calcium-dependent manner.

It is found in the secreted. It carries out the reaction Selective cleavage of Arg-|-Ile bond in factor X to form factor Xa.. Functionally, factor IX is a vitamin K-dependent plasma protein that participates in the intrinsic pathway of blood coagulation by converting factor X to its active form in the presence of Ca(2+) ions, phospholipids, and factor VIIIa. The protein is Coagulation factor IX (F9) of Ovis aries (Sheep).